Consider the following 61-residue polypeptide: Photosystem II reaction center protein K (61 aa).

A propeptide spanning residues Met1–Ala24 is cleaved from the precursor. Residues Met40–Phe60 form a helical membrane-spanning segment.

Belongs to the PsbK family. In terms of assembly, PSII is composed of 1 copy each of membrane proteins PsbA, PsbB, PsbC, PsbD, PsbE, PsbF, PsbH, PsbI, PsbJ, PsbK, PsbL, PsbM, PsbT, PsbX, PsbY, PsbZ, Psb30/Ycf12, at least 3 peripheral proteins of the oxygen-evolving complex and a large number of cofactors. It forms dimeric complexes.

It localises to the plastid. Its subcellular location is the chloroplast thylakoid membrane. Its function is as follows. One of the components of the core complex of photosystem II (PSII). PSII is a light-driven water:plastoquinone oxidoreductase that uses light energy to abstract electrons from H(2)O, generating O(2) and a proton gradient subsequently used for ATP formation. It consists of a core antenna complex that captures photons, and an electron transfer chain that converts photonic excitation into a charge separation. In Panax ginseng (Korean ginseng), this protein is Photosystem II reaction center protein K.